Reading from the N-terminus, the 122-residue chain is Large ribosomal subunit protein bL19 (122 aa).

The protein belongs to the bacterial ribosomal protein bL19 family.

This protein is located at the 30S-50S ribosomal subunit interface and may play a role in the structure and function of the aminoacyl-tRNA binding site. In Chlamydia abortus (strain DSM 27085 / S26/3) (Chlamydophila abortus), this protein is Large ribosomal subunit protein bL19.